Here is a 169-residue protein sequence, read N- to C-terminus: Group 2 truncated hemoglobin 3-2 (169 aa).

His-99 serves as a coordination point for heme b.

The protein belongs to the truncated hemoglobin family. Group II subfamily. In terms of assembly, homodimer when ferric.

In terms of biological role, hemoglobin-like protein that exhibits an unusual concentration-independent binding of O(2) and CO. Required for general plant development and during nodulation. May promote shoot organogenesis from root explants. The protein is Group 2 truncated hemoglobin 3-2 of Medicago truncatula (Barrel medic).